Reading from the N-terminus, the 199-residue chain is Protein ASYMMETRIC LEAVES 2 (199 aa).

Residues 8 to 109 (SPCAACKFLR…IDLSCAKSEL (102 aa)) form the LOB domain.

Belongs to the LOB domain-containing protein family. In terms of assembly, homo- and heterodimer with AS1. Interacts with AS1. Part of the AS1 repressor complex composed of AS1, LBD6/AS2 and HDA6. Interacts with LFR. In terms of tissue distribution, expressed in young shoots, roots, stems, leaves, flowers and adaxial domains of cotyledonary and leaves primordia.

The protein localises to the nucleus. Its function is as follows. Negative regulator of cell proliferation in the adaxial side of leaves. Regulates the formation of a symmetric lamina and the establishment of venation. Positively regulates LATERAL ORGAN BOUNDARIES (LOB) within the shoot apex, and the class III HD-ZIP genes REV, PHB, and PHV. Interacts directly with ASYMMETRIC LEAVES 1 (AS1) to repress the knox homeobox genes KNAT1, KNAT2, and KNAT6 and the abaxial determinants ARF3, KAN2 and YAB5. May act in parallel with the RDR6-SGS3-AGO7 pathway, an endogenous RNA silencing pathway, to regulate the leaf morphogenesis. Required for the binding of AS1 to the KNOX genes. Involved in leaf polarity establishment by functioning cooperatively with RH10 or RID2 to repress abaxial genes ARF3, ARF4, KAN1, KAN2, YAB1 and YAB5, and the knox homeobox genes KNAT1, KNAT2, KNAT6, and STM to promote adaxial development in leaf primordia at shoot apical meristems at high temperatures. The chain is Protein ASYMMETRIC LEAVES 2 from Arabidopsis thaliana (Mouse-ear cress).